A 1429-amino-acid chain; its full sequence is DNA-directed RNA polymerase subunit beta' (1429 aa).

Residues C68, C70, C83, and C86 each coordinate Zn(2+). Mg(2+)-binding residues include D459, D461, and D463. Residues C805, C879, C886, and C889 each coordinate Zn(2+). Residues 1407 to 1429 (ESFPLLGGDGEPASTTSSTTEGE) are disordered. Over residues 1419–1429 (ASTTSSTTEGE) the composition is skewed to polar residues.

It belongs to the RNA polymerase beta' chain family. As to quaternary structure, the RNAP catalytic core consists of 2 alpha, 1 beta, 1 beta' and 1 omega subunit. When a sigma factor is associated with the core the holoenzyme is formed, which can initiate transcription. Mg(2+) serves as cofactor. The cofactor is Zn(2+).

The catalysed reaction is RNA(n) + a ribonucleoside 5'-triphosphate = RNA(n+1) + diphosphate. Functionally, DNA-dependent RNA polymerase catalyzes the transcription of DNA into RNA using the four ribonucleoside triphosphates as substrates. This Rhodopirellula baltica (strain DSM 10527 / NCIMB 13988 / SH1) protein is DNA-directed RNA polymerase subunit beta'.